An 873-amino-acid polypeptide reads, in one-letter code: Zinc fingers and homeoboxes protein 1 (873 aa).

The residue at position 36 (T36) is a Phosphothreonine. The segment at 41-63 (AKAESVSSDEEVHGSVDSDNQQN) is disordered. S45, S47, and S48 each carry phosphoserine. The segment covering 50–63 (EEVHGSVDSDNQQN) has biased composition (basic and acidic residues). 2 C2H2-type zinc fingers span residues 70–93 (YECKYCTFQTPDLNMFTFHVDSEH) and 102–125 (YVCVECNFLTKRYDALSEHNLKYH). K159 participates in a covalent cross-link: Glycyl lysine isopeptide (Lys-Gly) (interchain with G-Cter in SUMO2). Positions 198 to 247 (VHHNSAEGTSEEKENGVKASQEENAESVSSSALESNTSTSTINRVHPSPA) are disordered. S202 carries the post-translational modification Phosphoserine. The segment covering 223–238 (ESVSSSALESNTSTST) has biased composition (low complexity). Residues 272–432 (NSNLLPKVLI…QTNVQKSQVP (161 aa)) form a required for dimerization region. Residues 272–564 (NSNLLPKVLI…SQQKQSWNPF (293 aa)) are required for interaction with NFYA. A DNA-binding region (homeobox 1) is located at residues 284–346 (NSIPTYNAAL…LKHGVSWTPE (63 aa)). The interval 429 to 456 (SQVPAAQPATDTKPATAAVPSSPSVRPE) is disordered. Glycyl lysine isopeptide (Lys-Gly) (interchain with G-Cter in SUMO2) cross-links involve residues K441 and K485. The segment at residues 464-526 (SFGIRAKKTK…YNQRNSKSNQ (63 aa)) is a DNA-binding region (homeobox 2). 3 disordered regions span residues 541–568 (DSSDETPEPPAAAASQQKQSWNPFPDFA), 627–668 (DEKI…CKKT), and 731–767 (SSSLNGLSSLRRRGRGRPKGRGRGRPRGRPRGGKRMN). The segment at residues 569–630 (PQKFKEKTAE…KTKALKDEKI (62 aa)) is a DNA-binding region (homeobox 3). K629 participates in a covalent cross-link: Glycyl lysine isopeptide (Lys-Gly) (interchain with G-Cter in SUMO2). Residue S648 is modified to Phosphoserine. Positions 660 to 722 (GTGKICKKTP…YAWKNGNLKW (63 aa)) form a DNA-binding region, homeobox 4. The interval 734–768 (LNGLSSLRRRGRGRPKGRGRGRPRGRPRGGKRMNT) is required for nuclear localization. The segment covering 740–764 (LRRRGRGRPKGRGRGRPRGRPRGGK) has biased composition (basic residues). At S774 the chain carries Phosphoserine. The homeobox 5 DNA-binding region spans 777 to 832 (KFKTGTAILKDYYLKHKFLNEQDLDELVNRSHMGYEQVREWFAERQRRSELGIELF). Residues 829-873 (IELFEENEEEDEVVDDQEEDEEETDDSDTWEPPRHVKRKLSKSDD) are disordered. Acidic residues predominate over residues 831-857 (LFEENEEEDEVVDDQEEDEEETDDSDT). The interval 831–873 (LFEENEEEDEVVDDQEEDEEETDDSDTWEPPRHVKRKLSKSDD) is required for repressor activity. A compositionally biased stretch (basic residues) spans 863–873 (HVKRKLSKSDD).

The protein belongs to the ZHX family. Forms homodimers. Heterodimer (via HD1 domain) with ZHX2 (via HD1 domain). Also forms a heterodimer with ZHX3 which is a prerequisite for repressor activity. Interacts with ATF7IP and NFYA. Interacts (via homeobox domains) with DNMT3B (via PWWP domain). Widely expressed with highest levels in brain.

It is found in the nucleus. Acts as a transcriptional repressor. Increases DNMT3B-mediated repressive transcriptional activity when DNMT3B is tethered to DNA. May link molecule between DNMT3B and other co-repressor proteins. The polypeptide is Zinc fingers and homeoboxes protein 1 (Zhx1) (Mus musculus (Mouse)).